The following is a 395-amino-acid chain: uncharacterized protein (395 aa).

The tract at residues 115–144 is disordered; it reads TKPPTEGGPEKDQSSPSQTQAAPQGPSTAS. The segment covering 128–141 has biased composition (low complexity); that stretch reads SSPSQTQAAPQGPS.

This is an uncharacterized protein from Homo sapiens (Human).